The sequence spans 277 residues: MGQKINPFGYRLGITESHRSKWFSDSNKVGERYRDFVLEDDAIRKVMNKDLERAGVSRIIIERTRDRVRVDIHTARPGIVIGRRGAEAERVRAKLEKLTGKQVQLNIFEVKNPAIDAQLVAQGIAEQLTNRVTFRRAMRKAQQDAMRAGAKGIRIKLSGRLGGAEMSRSEFYREGRVPLQTLRALIDYGFFEAKTTYGRIGVKVWIYKGDMTEREFEEQQAQQGNNRPGRRGGDRRPRRGQRAGQRPTGQNQVKTGPDQQMEAEVSKEAAVEPETKE.

A KH type-2 domain is found at 43 to 111 (IRKVMNKDLE…QVQLNIFEVK (69 aa)). The interval 216–277 (FEEQQAQQGN…EAAVEPETKE (62 aa)) is disordered. Positions 264 to 277 (EVSKEAAVEPETKE) are enriched in basic and acidic residues.

Belongs to the universal ribosomal protein uS3 family. In terms of assembly, part of the 30S ribosomal subunit. Forms a tight complex with proteins S10 and S14.

Binds the lower part of the 30S subunit head. Binds mRNA in the 70S ribosome, positioning it for translation. This chain is Small ribosomal subunit protein uS3, found in Bifidobacterium animalis subsp. lactis (strain AD011).